The following is a 417-amino-acid chain: NADH-quinone oxidoreductase subunit D (417 aa).

This sequence belongs to the complex I 49 kDa subunit family. As to quaternary structure, NDH-1 is composed of 14 different subunits. Subunits NuoB, C, D, E, F, and G constitute the peripheral sector of the complex.

Its subcellular location is the cell inner membrane. It catalyses the reaction a quinone + NADH + 5 H(+)(in) = a quinol + NAD(+) + 4 H(+)(out). Its function is as follows. NDH-1 shuttles electrons from NADH, via FMN and iron-sulfur (Fe-S) centers, to quinones in the respiratory chain. The immediate electron acceptor for the enzyme in this species is believed to be ubiquinone. Couples the redox reaction to proton translocation (for every two electrons transferred, four hydrogen ions are translocated across the cytoplasmic membrane), and thus conserves the redox energy in a proton gradient. The protein is NADH-quinone oxidoreductase subunit D of Verminephrobacter eiseniae (strain EF01-2).